Reading from the N-terminus, the 88-residue chain is SPbeta prophage-derived protein BhlB (88 aa).

2 helical membrane-spanning segments follow: residues 15-35 and 45-65; these read LLAI…AFII and DCLY…AAWF.

This sequence belongs to the SPP1 holin family.

Its subcellular location is the cell membrane. May be involved in the secretion of the autolysin BlyA. In Bacillus subtilis (strain 168), this protein is SPbeta prophage-derived protein BhlB (bhlB).